The sequence spans 113 residues: Large ribosomal subunit protein uL22 (113 aa).

The protein belongs to the universal ribosomal protein uL22 family. Part of the 50S ribosomal subunit.

This protein binds specifically to 23S rRNA; its binding is stimulated by other ribosomal proteins, e.g. L4, L17, and L20. It is important during the early stages of 50S assembly. It makes multiple contacts with different domains of the 23S rRNA in the assembled 50S subunit and ribosome. Functionally, the globular domain of the protein is located near the polypeptide exit tunnel on the outside of the subunit, while an extended beta-hairpin is found that lines the wall of the exit tunnel in the center of the 70S ribosome. The chain is Large ribosomal subunit protein uL22 from Solibacter usitatus (strain Ellin6076).